Consider the following 211-residue polypeptide: Probable GTP-binding protein EngB (211 aa).

The 177-residue stretch at 21–197 folds into the EngB-type G domain; that stretch reads TAPEFAFLGR…WGEIHRVAAE (177 aa). GTP contacts are provided by residues 29 to 36, 55 to 59, 80 to 83, 147 to 150, and 176 to 178; these read GRSNVGKS, GRTRA, DLPG, TKAD, and CSA. 2 residues coordinate Mg(2+): serine 36 and threonine 57.

Belongs to the TRAFAC class TrmE-Era-EngA-EngB-Septin-like GTPase superfamily. EngB GTPase family. Mg(2+) is required as a cofactor.

Necessary for normal cell division and for the maintenance of normal septation. The protein is Probable GTP-binding protein EngB of Acidobacterium capsulatum (strain ATCC 51196 / DSM 11244 / BCRC 80197 / JCM 7670 / NBRC 15755 / NCIMB 13165 / 161).